The chain runs to 64 residues: Large ribosomal subunit protein bL32 (64 aa).

It belongs to the bacterial ribosomal protein bL32 family.

The sequence is that of Large ribosomal subunit protein bL32 from Mycoplasma mobile (strain ATCC 43663 / 163K / NCTC 11711) (Mesomycoplasma mobile).